Reading from the N-terminus, the 66-residue chain is Kappa-flavitoxin (66 aa).

Cystine bridges form between C3–C21, C14–C42, C27–C31, C46–C58, and C59–C64.

The protein belongs to the three-finger toxin family. Long-chain subfamily. Kappa-neurotoxin sub-subfamily. In terms of assembly, homo- and heterodimer; non-covalently linked. Expressed by the venom gland.

It is found in the secreted. Functionally, postsynaptic neurotoxin that binds and inhibits neuronal nicotinic acetylcholine receptors (nAChR) with high affinity (IC(50)&lt;100 nM). Is a selective, and slowly reversible antagonist of alpha-3/CHRNA3-containing and some alpha-4/CHRNA4-containing AChRs. The chain is Kappa-flavitoxin from Bungarus flaviceps flaviceps (Red-headed krait).